A 541-amino-acid polypeptide reads, in one-letter code: Arginine-containing cyclodipeptide synthase avaA (541 aa).

A Conserved DDXXE motif motif is present at residues 428–432 (DDIAE).

It belongs to the arginine-containing cyclodipeptide synthase family.

It catalyses the reaction L-tryptophyl-tRNA(Trp) + L-arginyl-tRNA(Arg) = cyclo(L-arginyl-L-tryptophyl) + tRNA(Trp) + tRNA(Arg) + H(+). Its pathway is secondary metabolite biosynthesis. In terms of biological role, arginine-containing cyclodipeptide synthase; part of the cluster that mediates the biosynthesis of a highly modified cyclo-arginine-tryptophan dipeptide (cRW). Within the pathway, avaA acts as the scaffold-generating enzyme and is responsible for formation of the cyclo-Arg-Trp diketopiperazine (cRW) from L-arginyl-tRNA(Arg) + L-tryptophanyl-tRNA(Trp). AvaB then acts as a multifunctional flavoenzyme that is responsible for generating the cyclo-Arg-formylkynurenine DKP, which can be deformylated by avaC. AvaB then catalyzes an additional N-oxidation followed by cyclization and dehydration. The next step is an N-acetylation of the guanidine group catalyzed by the arginine N-acetyltransferase AvaD. The role of the additional enzymes identified within the ava cluster still have to be determined. The protein is Arginine-containing cyclodipeptide synthase avaA of Aspergillus versicolor.